A 510-amino-acid chain; its full sequence is NAD(P)H-quinone oxidoreductase subunit 2 B, chloroplastic (510 aa).

13 consecutive transmembrane segments (helical) span residues 24 to 44 (LLLFDGSFIFPECILIFGLIL), 57 to 77 (IPWLYFISSTSLVMSITALLF), 99 to 119 (IFQFLILLCSTLCIPLSVEYI), 124 to 144 (MAITEFLLFVLTATLGGMFLC), 149 to 169 (LITIFVAPECFSLCSYLLSGY), 183 to 203 (YLLMGGASSSILVHGFSWLYG), 227 to 247 (PGISIALIFITVGIGFKLSPA), 295 to 315 (WHLLLEILAILSMILGNLIAI), 323 to 343 (MLAYSSIGQIGYVIIGIIVGD), 354 to 374 (YMLFYISMNLGTFACIVSFGL), 392 to 412 (AFLALSLALCLLSLGGLPPLA), 418 to 438 (LHLFWCGWQAGLYFLVSIGLL), and 482 to 502 (LSMIVCVIASTIPGISMNPII).

The protein belongs to the complex I subunit 2 family. As to quaternary structure, NDH is composed of at least 16 different subunits, 5 of which are encoded in the nucleus.

It localises to the plastid. The protein resides in the chloroplast thylakoid membrane. It catalyses the reaction a plastoquinone + NADH + (n+1) H(+)(in) = a plastoquinol + NAD(+) + n H(+)(out). The enzyme catalyses a plastoquinone + NADPH + (n+1) H(+)(in) = a plastoquinol + NADP(+) + n H(+)(out). In terms of biological role, NDH shuttles electrons from NAD(P)H:plastoquinone, via FMN and iron-sulfur (Fe-S) centers, to quinones in the photosynthetic chain and possibly in a chloroplast respiratory chain. The immediate electron acceptor for the enzyme in this species is believed to be plastoquinone. Couples the redox reaction to proton translocation, and thus conserves the redox energy in a proton gradient. This chain is NAD(P)H-quinone oxidoreductase subunit 2 B, chloroplastic, found in Morus indica (Mulberry).